A 102-amino-acid polypeptide reads, in one-letter code: Parathymosin (102 aa).

The segment at 1-102 (MSEKSVEAAA…RQKTENGASA (102 aa)) is disordered. At S2 the chain carries N-acetylserine. Position 2 is a phosphoserine (S2). N6-acetyllysine is present on K4. Residues S5 and S13 each carry the phosphoserine modification. Residues 13-37 (SAKDLKEKKEKVEEKASRKERKKEV) show a composition bias toward basic and acidic residues. The residue at position 15 (K15) is an N6-acetyllysine. The segment covering 38-76 (VEEEENGAEEEEEETAEDGEEEDEGEEEDEEEEEEDDEG) has biased composition (acidic residues). T52 carries the phosphothreonine modification. An N6-acetyllysine modification is found at K92.

It belongs to the pro/parathymosin family.

Parathymosin may mediate immune function by blocking the effect of prothymosin alpha which confers resistance to certain opportunistic infections. The polypeptide is Parathymosin (PTMS) (Homo sapiens (Human)).